The following is a 303-amino-acid chain: Protein SULFUR DEFICIENCY-INDUCED 2 (303 aa).

Residues 62–89 adopt a coiled-coil conformation; that stretch reads RVDSALKDMALLMKQQNRAEEAIDAIQS. TPR repeat units follow at residues 64–97, 100–133, 160–193, and 195–226; these read DSAL…CSRQ, ESLD…IYQG, SRIL…EPDA, and KACN…ENKE. Residues 232 to 253 adopt a coiled-coil conformation; it reads RLMARVQELLSELKPQEEEAAA.

It belongs to the MS5 protein family.

The protein localises to the nucleus. Its function is as follows. Involved in the utilization of stored sulfate under sulfur-deficient conditions. The sequence is that of Protein SULFUR DEFICIENCY-INDUCED 2 from Arabidopsis thaliana (Mouse-ear cress).